The chain runs to 445 residues: Chromosomal replication initiator protein DnaA (445 aa).

A domain I, interacts with DnaA modulators region spans residues 1 to 73; it reads MSPNSTLWQT…NELATKYSST (73 aa). Residues 73-102 form a domain II region; sequence TPVRLKFVSQEEVIEEPVADRKLTIDYRQG. Positions 103-323 are domain III, AAA+ region; it reads NLNSTYTFDS…GALIRLISYA (221 aa). ATP is bound by residues G147, G149, K150, and T151. Residues 324 to 445 form a domain IV, binds dsDNA region; the sequence is QTFNLEITMN…KFAVDSIVKK (122 aa).

The protein belongs to the DnaA family. In terms of assembly, oligomerizes as a right-handed, spiral filament on DNA at oriC.

Its subcellular location is the cytoplasm. Its function is as follows. Plays an essential role in the initiation and regulation of chromosomal replication. ATP-DnaA binds to the origin of replication (oriC) to initiate formation of the DNA replication initiation complex once per cell cycle. Binds the DnaA box (a 9 base pair repeat at the origin) and separates the double-stranded (ds)DNA. Forms a right-handed helical filament on oriC DNA; dsDNA binds to the exterior of the filament while single-stranded (ss)DNA is stabiized in the filament's interior. The ATP-DnaA-oriC complex binds and stabilizes one strand of the AT-rich DNA unwinding element (DUE), permitting loading of DNA polymerase. After initiation quickly degrades to an ADP-DnaA complex that is not apt for DNA replication. Binds acidic phospholipids. This Acholeplasma laidlawii protein is Chromosomal replication initiator protein DnaA.